Reading from the N-terminus, the 101-residue chain is Protein S100-A7 (101 aa).

The residue at position 2 (Ser-2) is an N-acetylserine. EF-hand domains follow at residues 8-42 and 50-85; these read QAIT…NFPN and RGRD…IATD. Zn(2+) is bound by residues His-18 and Asp-25. Ca(2+) contacts are provided by Asp-63, Asn-65, Asp-67, Lys-69, and Glu-74. Zn(2+) is bound by residues His-87 and His-91.

The protein belongs to the S-100 family. As to quaternary structure, interacts with RANBP9.

The protein resides in the cytoplasm. It localises to the secreted. In Bos taurus (Bovine), this protein is Protein S100-A7 (S100A7).